Reading from the N-terminus, the 498-residue chain is ATP synthase subunit beta, chloroplastic (498 aa).

172–179 is a binding site for ATP; sequence GGAGVGKT.

The protein belongs to the ATPase alpha/beta chains family. As to quaternary structure, F-type ATPases have 2 components, CF(1) - the catalytic core - and CF(0) - the membrane proton channel. CF(1) has five subunits: alpha(3), beta(3), gamma(1), delta(1), epsilon(1). CF(0) has four main subunits: a(1), b(1), b'(1) and c(9-12).

The protein localises to the plastid. Its subcellular location is the chloroplast thylakoid membrane. It carries out the reaction ATP + H2O + 4 H(+)(in) = ADP + phosphate + 5 H(+)(out). Functionally, produces ATP from ADP in the presence of a proton gradient across the membrane. The catalytic sites are hosted primarily by the beta subunits. This chain is ATP synthase subunit beta, chloroplastic, found in Platanus occidentalis (Sycamore).